A 59-amino-acid chain; its full sequence is Early protein GP1A (59 aa).

The protein is Early protein GP1A (1A) of Bacillus phage PZA (Bacteriophage PZA).